The sequence spans 95 residues: MRKYEIMYIIRPNLDDEARQAVVDRFNNILKENGAEITNVTDWGKRRLAYEIKKYRDGHYMILNVVSEPKAVQEFDRLARISDDIIRHIVVKEEK.

Belongs to the bacterial ribosomal protein bS6 family.

Its function is as follows. Binds together with bS18 to 16S ribosomal RNA. In Geobacillus sp. (strain WCH70), this protein is Small ribosomal subunit protein bS6.